Consider the following 365-residue polypeptide: Endophilin-B1 (365 aa).

At Met-1 the chain carries N-acetylmethionine. A membrane-binding amphipathic helix region spans residues Met-1 to Leu-30. Positions Met-1–Glu-37 are required for membrane binding. A BAR domain is found at Glu-27–Ser-261. At Thr-145 the chain carries Phosphothreonine; by CDK5. Residues Lys-156 to Ala-185 adopt a coiled-coil conformation. One can recognise an SH3 domain in the interval Ser-305–Asn-365.

This sequence belongs to the endophilin family. In terms of assembly, homodimer, and heterodimer with SH3GLB2. Binds BAX; induction of apoptosis augments BAX binding. Binds DNM1, HTT, AMPH, BIN1 and ARFGAP1. Interacts with UVRAG; UVRAG bridges the interaction to BECN1 indicative for an association with the PI3K complex II (PI3KC3-C2). Phosphorylated at Thr-145 by CDK5; this phosphorylation is required for autophagy induction in starved neurons and facilitates homodimerization. In terms of tissue distribution, expressed in brain, heart, lung and spleen. Low level in liver and testis.

It localises to the cytoplasm. The protein resides in the golgi apparatus membrane. The protein localises to the mitochondrion outer membrane. It is found in the cytoplasmic vesicle. Its subcellular location is the autophagosome membrane. It localises to the midbody. Functionally, may be required for normal outer mitochondrial membrane dynamics. Required for coatomer-mediated retrograde transport in certain cells. May recruit other proteins to membranes with high curvature. May promote membrane fusion. Involved in activation of caspase-dependent apoptosis by promoting BAX/BAK1 activation. Involved in caspase-independent apoptosis during nutrition starvation and involved in the regulation of autophagy. Activates lipid kinase activity of PIK3C3 during autophagy probably by associating with the PI3K complex II (PI3KC3-C2). Associated with PI3KC3-C2 during autophagy may regulate the trafficking of ATG9A from the Golgi complex to the peripheral cytoplasm for the formation of autophagosomes by inducing Golgi membrane tubulation and fragmentation. Involved in regulation of degradative endocytic trafficking and cytokinesis, probably in the context of PI3KC3-C2. The sequence is that of Endophilin-B1 from Rattus norvegicus (Rat).